The sequence spans 790 residues: PAN2-PAN3 deadenylation complex subunit PAN3 (790 aa).

Disordered regions lie at residues 166 to 191 (IAQQ…AVSA) and 235 to 259 (AMIS…ASPI). A compositionally biased stretch (low complexity) spans 168-191 (QQQPQHPQKQQQHPPSVGGGAVSA). The pseudokinase domain stretch occupies residues 369 to 655 (DAAEAAQHAL…SVTDLMPMIG (287 aa)). ATP contacts are provided by residues R423, 472-479 (DYHPGSQT), and 552-553 (TK). Positions 656–694 (ARFYTQLDALQSKIDMQEDELAKEMENGRLYRILVKLNS) form a coiled coil. The interval 695–790 (INERPDFNLD…FSELMSSAAN (96 aa)) is knob domain.

This sequence belongs to the protein kinase superfamily. PAN3 family. Homodimer. Forms a heterotrimer with a catalytic subunit PAN2 to form the poly(A)-nuclease (PAN) deadenylation complex. Interacts (via PAM-2 motif) with poly(A)-binding protein (via PABC domain), conferring substrate specificity of the enzyme complex. Interacts with the GW182 family protein gw. Interacts with Gyf.

It is found in the cytoplasm. It localises to the P-body. Regulatory subunit of the poly(A)-nuclease (PAN) deadenylation complex, one of two cytoplasmic mRNA deadenylases involved in general and miRNA-mediated mRNA turnover. PAN specifically shortens poly(A) tails of RNA and the activity is stimulated by poly(A)-binding protein (PABP). PAN deadenylation is followed by rapid degradation of the shortened mRNA tails by the CCR4-NOT complex. Deadenylated mRNAs are then degraded by two alternative mechanisms, namely exosome-mediated 3'-5' exonucleolytic degradation, or deadenylation-dependent mRNA decaping and subsequent 5'-3' exonucleolytic degradation by XRN1. PAN3 acts as a positive regulator for PAN activity, recruiting the catalytic subunit PAN2 to mRNA via its interaction with RNA and PABP, and to miRNA targets via its interaction with GW182 family proteins. The chain is PAN2-PAN3 deadenylation complex subunit PAN3 from Drosophila melanogaster (Fruit fly).